The sequence spans 497 residues: Cytochrome P450 2D6 (497 aa).

Asp-301 is a substrate binding site. Cys-443 is a heme binding site.

The protein belongs to the cytochrome P450 family. Requires heme as cofactor.

It is found in the endoplasmic reticulum membrane. It localises to the microsome membrane. It carries out the reaction (5Z,8Z,11Z,14Z)-eicosatetraenoate + reduced [NADPH--hemoprotein reductase] + O2 = (8R,9S)-epoxy-(5Z,11Z,14Z)-eicosatrienoate + oxidized [NADPH--hemoprotein reductase] + H2O + H(+). The enzyme catalyses (5Z,8Z,11Z,14Z)-eicosatetraenoate + reduced [NADPH--hemoprotein reductase] + O2 = (11R,12S)-epoxy-(5Z,8Z,14Z)-eicosatrienoate + oxidized [NADPH--hemoprotein reductase] + H2O + H(+). It catalyses the reaction (5Z,8Z,11Z,14Z)-eicosatetraenoate + reduced [NADPH--hemoprotein reductase] + O2 = (14S,15R)-epoxy-(5Z,8Z,11Z)-eicosatrienoate + oxidized [NADPH--hemoprotein reductase] + H2O + H(+). The catalysed reaction is N-(5Z,8Z,11Z,14Z-eicosatetraenoyl)-ethanolamine + reduced [NADPH--hemoprotein reductase] + O2 = N-(8,9-epoxy-5Z,11Z,14Z-eicosatrienoyl)-ethanolamine + oxidized [NADPH--hemoprotein reductase] + H2O + H(+). It carries out the reaction N-(5Z,8Z,11Z,14Z-eicosatetraenoyl)-ethanolamine + reduced [NADPH--hemoprotein reductase] + O2 = N-(11,12-epoxy-5Z,8Z,14Z-eicosatrienoyl)-ethanolamine + oxidized [NADPH--hemoprotein reductase] + H2O + H(+). The enzyme catalyses N-(5Z,8Z,11Z,14Z-eicosatetraenoyl)-ethanolamine + reduced [NADPH--hemoprotein reductase] + O2 = N-(14,15-epoxy-5Z,8Z,11Z-eicosatrienoyl)-ethanolamine + oxidized [NADPH--hemoprotein reductase] + H2O + H(+). It catalyses the reaction N-(5Z,8Z,11Z,14Z-eicosatetraenoyl)-ethanolamine + reduced [NADPH--hemoprotein reductase] + O2 = N-(20-hydroxy-5Z,8Z,11Z,14Z-eicosatetraenoyl)-ethanolamine + oxidized [NADPH--hemoprotein reductase] + H2O + H(+). The catalysed reaction is (5Z,8Z,11Z,14Z,17Z)-eicosapentaenoate + reduced [NADPH--hemoprotein reductase] + O2 = (17S,18R)-epoxy-(5Z,8Z,11Z,14Z)-eicosatetraenoate + oxidized [NADPH--hemoprotein reductase] + H2O + H(+). It carries out the reaction (4Z,7Z,10Z,13Z,16Z,19Z)-docosahexaenoate + reduced [NADPH--hemoprotein reductase] + O2 = (19R,20S)-epoxy-(4Z,7Z,10Z,13Z,16Z)-docosapentaenoate + oxidized [NADPH--hemoprotein reductase] + H2O + H(+). The enzyme catalyses (4Z,7Z,10Z,13Z,16Z,19Z)-docosahexaenoate + reduced [NADPH--hemoprotein reductase] + O2 = (19S,20R)-epoxy-(4Z,7Z,10Z,13Z,16Z)-docosapentaenoate + oxidized [NADPH--hemoprotein reductase] + H2O + H(+). It catalyses the reaction cholesterol + reduced [NADPH--hemoprotein reductase] + O2 = 25-hydroxycholesterol + oxidized [NADPH--hemoprotein reductase] + H2O + H(+). The catalysed reaction is all-trans-retinol + reduced [NADPH--hemoprotein reductase] + O2 = all-trans-retinal + oxidized [NADPH--hemoprotein reductase] + 2 H2O + H(+). Its pathway is cofactor metabolism; retinol metabolism. It functions in the pathway lipid metabolism; fatty acid metabolism. The protein operates within steroid metabolism; cholesterol metabolism. In terms of biological role, a cytochrome P450 monooxygenase involved in the metabolism of fatty acids, steroids and retinoids. Mechanistically, uses molecular oxygen inserting one oxygen atom into a substrate, and reducing the second into a water molecule, with two electrons provided by NADPH via cytochrome P450 reductase (NADPH--hemoprotein reductase). Catalyzes the epoxidation of double bonds of polyunsaturated fatty acids (PUFA). Metabolizes endocannabinoid arachidonoylethanolamide (anandamide) to 20-hydroxyeicosatetraenoic acid ethanolamide (20-HETE-EA) and 8,9-, 11,12-, and 14,15-epoxyeicosatrienoic acid ethanolamides (EpETrE-EAs), potentially modulating endocannabinoid system signaling. Catalyzes the hydroxylation of carbon-hydrogen bonds. Metabolizes cholesterol toward 25-hydroxycholesterol, a physiological regulator of cellular cholesterol homeostasis. Catalyzes the oxidative transformations of all-trans retinol to all-trans retinal, a precursor for the active form all-trans-retinoic acid. Also involved in the oxidative metabolism of drugs such as antiarrhythmics, adrenoceptor antagonists, and tricyclic antidepressants. This is Cytochrome P450 2D6 from Homo sapiens (Human).